The primary structure comprises 358 residues: Fructose-bisphosphate aldolase 3, cytoplasmic (358 aa).

R39 lines the substrate pocket. E183 serves as the catalytic Proton acceptor. K225 serves as the catalytic Schiff-base intermediate with dihydroxyacetone-P. Residues 266 to 268 (SGG) and R298 contribute to the substrate site.

It belongs to the class I fructose-bisphosphate aldolase family. Homotetramer.

The protein resides in the cytoplasm. It localises to the cytosol. The catalysed reaction is beta-D-fructose 1,6-bisphosphate = D-glyceraldehyde 3-phosphate + dihydroxyacetone phosphate. It participates in carbohydrate degradation; glycolysis; D-glyceraldehyde 3-phosphate and glycerone phosphate from D-glucose: step 4/4. Fructose-bisphosphate aldolase that plays a key role in glycolysis and gluconeogenesis. The sequence is that of Fructose-bisphosphate aldolase 3, cytoplasmic from Oryza sativa subsp. japonica (Rice).